We begin with the raw amino-acid sequence, 963 residues long: Probable sucrose-phosphate synthase 2 (963 aa).

The tract at residues 111 to 150 is disordered; sequence KLRTDTNADMSEDLFEGEKGEDAGDPSVAYGDSTTGSSPK.

Belongs to the glycosyltransferase 1 family. As to quaternary structure, homodimer or homotetramer. In terms of tissue distribution, expressed in germinating seeds.

It carries out the reaction beta-D-fructose 6-phosphate + UDP-alpha-D-glucose = sucrose 6(F)-phosphate + UDP + H(+). It functions in the pathway glycan biosynthesis; sucrose biosynthesis; sucrose from D-fructose 6-phosphate and UDP-alpha-D-glucose: step 1/2. Its activity is regulated as follows. Activity is regulated by phosphorylation and moderated by concentration of metabolites and light. Plays a role in photosynthetic sucrose synthesis by catalyzing the rate-limiting step of sucrose biosynthesis from UDP-glucose and fructose- 6-phosphate. Involved in the regulation of carbon partitioning in the leaves of plants. May regulate the synthesis of sucrose and therefore play a major role as a limiting factor in the export of photoassimilates out of the leaf. Plays a role for sucrose availability that is essential for plant growth and fiber elongation. The chain is Probable sucrose-phosphate synthase 2 (SPS2) from Oryza sativa subsp. japonica (Rice).